Reading from the N-terminus, the 143-residue chain is Transcription antitermination protein NusB (143 aa).

It belongs to the NusB family.

Its function is as follows. Involved in transcription antitermination. Required for transcription of ribosomal RNA (rRNA) genes. Binds specifically to the boxA antiterminator sequence of the ribosomal RNA (rrn) operons. This Desulfatibacillum aliphaticivorans protein is Transcription antitermination protein NusB.